We begin with the raw amino-acid sequence, 202 residues long: Shikimate kinase (202 aa).

Position 20–25 (20–25 (GSGKST)) interacts with ATP. Ser24 is a Mg(2+) binding site. 3 residues coordinate substrate: Asp42, Arg66, and Gly88. An ATP-binding site is contributed by Arg126. Substrate is bound at residue Arg153.

The protein belongs to the shikimate kinase family. Monomer. The cofactor is Mg(2+).

It is found in the cytoplasm. The enzyme catalyses shikimate + ATP = 3-phosphoshikimate + ADP + H(+). Its pathway is metabolic intermediate biosynthesis; chorismate biosynthesis; chorismate from D-erythrose 4-phosphate and phosphoenolpyruvate: step 5/7. In terms of biological role, catalyzes the specific phosphorylation of the 3-hydroxyl group of shikimic acid using ATP as a cosubstrate. This is Shikimate kinase from Chlorobium luteolum (strain DSM 273 / BCRC 81028 / 2530) (Pelodictyon luteolum).